The following is a 485-amino-acid chain: Mitochondria-eating protein (485 aa).

Residues 112 to 210 (TSHERELNEV…SILSSESSIL (99 aa)) adopt a coiled-coil conformation. Composition is skewed to low complexity over residues 214-241 (LSRS…SPTS) and 471-485 (RSRS…TPRF). Disordered regions lie at residues 214–244 (LSRS…SAKL) and 451–485 (RSRS…TPRF).

It belongs to the MIEAP family.

The protein localises to the cytoplasm. The protein resides in the mitochondrion outer membrane. It localises to the mitochondrion matrix. In terms of biological role, key regulator of mitochondrial quality that mediates the repairing or degradation of unhealthy mitochondria in response to mitochondrial damage. Mediator of mitochondrial protein catabolic process (also named MALM) by mediating the degradation of damaged proteins inside mitochondria by promoting the accumulation in the mitochondrial matrix of hydrolases that are characteristic of the lysosomal lumen. Also involved in mitochondrion degradation of damaged mitochondria by promoting the formation of vacuole-like structures (named MIV), which engulf and degrade unhealthy mitochondria by accumulating lysosomes. Binds cardiolipin. May form molecular condensates (non-membrane-bounded organelles) within mitochondria that compartmentalize and promote cardiolipin metabolism. The sequence is that of Mitochondria-eating protein (spata18) from Xenopus laevis (African clawed frog).